We begin with the raw amino-acid sequence, 499 residues long: Guanosine-5'-triphosphate,3'-diphosphate pyrophosphatase (499 aa).

This sequence belongs to the GppA/Ppx family. GppA subfamily.

The enzyme catalyses guanosine 3'-diphosphate 5'-triphosphate + H2O = guanosine 3',5'-bis(diphosphate) + phosphate + H(+). It participates in purine metabolism; ppGpp biosynthesis; ppGpp from GTP: step 2/2. Its function is as follows. Catalyzes the conversion of pppGpp to ppGpp. Guanosine pentaphosphate (pppGpp) is a cytoplasmic signaling molecule which together with ppGpp controls the 'stringent response', an adaptive process that allows bacteria to respond to amino acid starvation, resulting in the coordinated regulation of numerous cellular activities. The chain is Guanosine-5'-triphosphate,3'-diphosphate pyrophosphatase from Sodalis glossinidius (strain morsitans).